The primary structure comprises 177 residues: Large ribosomal subunit protein uL6 (177 aa).

It belongs to the universal ribosomal protein uL6 family. In terms of assembly, part of the 50S ribosomal subunit.

This protein binds to the 23S rRNA, and is important in its secondary structure. It is located near the subunit interface in the base of the L7/L12 stalk, and near the tRNA binding site of the peptidyltransferase center. This is Large ribosomal subunit protein uL6 from Photobacterium profundum (strain SS9).